Consider the following 322-residue polypeptide: Ribose-phosphate pyrophosphokinase 1 (322 aa).

Residues 39-41 and 98-99 each bind ATP; these read DGE and RQ. Residues histidine 132 and aspartate 173 each coordinate Mg(2+). Lysine 196 is a catalytic residue. D-ribose 5-phosphate-binding positions include arginine 198, aspartate 224, and 228–232; that span reads DTAGT.

It belongs to the ribose-phosphate pyrophosphokinase family. Class I subfamily. As to quaternary structure, homohexamer. It depends on Mg(2+) as a cofactor.

Its subcellular location is the cytoplasm. It carries out the reaction D-ribose 5-phosphate + ATP = 5-phospho-alpha-D-ribose 1-diphosphate + AMP + H(+). It participates in metabolic intermediate biosynthesis; 5-phospho-alpha-D-ribose 1-diphosphate biosynthesis; 5-phospho-alpha-D-ribose 1-diphosphate from D-ribose 5-phosphate (route I): step 1/1. Functionally, involved in the biosynthesis of the central metabolite phospho-alpha-D-ribosyl-1-pyrophosphate (PRPP) via the transfer of pyrophosphoryl group from ATP to 1-hydroxyl of ribose-5-phosphate (Rib-5-P). The chain is Ribose-phosphate pyrophosphokinase 1 from Streptococcus pneumoniae serotype 4 (strain ATCC BAA-334 / TIGR4).